The primary structure comprises 652 residues: MVFGMNLGNRRKATRVPDLSRYDYHYNGSGGNSVNQGDNYLKSHELSADAAFAASARAGSLVNYPERGYTNISRANSLRMGHPGQQQQQSSYIPRSYSFTARGAYAPRTGNVGNRRSVSAIPRTGTASSRGVGSRTGSMTGSVARVGSRTGSFAGGGNGSIIIKTQEVKDMMGRTQSITTQTIRRINGMEYVETTTQTAGLVEDPQFHFQQFAENDEFPISDELSATPPAAPLSESQPRTNQRLANFNSNAINNSAANNIRSDSEEEGEEHFTDASDVVEESGAFAEDDQDHFLAKVNKVDVDNNSKSYTSRKPLVQKQGVQQQQEVQHQGISQVQNTEAKSVGRKSTMSKRMTLRDTPNAQLEPEKDTTDQATPDNNATKRKSIFKSKKRNEAVAVPTVPTSDQKTLSQEEMYAIALEIAQQKYGHPTKTVSHSTDNGSRNEMTPILEDADVEQPHVLPTTLHLPTREEQIQHEQLQQPTAAIPTNEKSRHPKKKVKSILDRVVQFSQENSGNQPPKQHRGKQYSQQPPDVAPSNGTTDNFDTNASGHNINHNNNNHNNNNNTSSSSSLRHESGANPVVVTEDTTVLAASTAATPVDVNEPGNPDHVIPASSPSIDNTPRINEKTKSKKKNEKGSFFKRLFKSNKTHINTK.

Disordered regions lie at residues 123–151 (RTGT…SRTG), 304–406 (NNSK…SDQK), 470–576 (EQIQ…ESGA), and 594–652 (ATPV…INTK). Over residues 125-141 (GTASSRGVGSRTGSMTG) the composition is skewed to polar residues. A compositionally biased stretch (low complexity) spans 316-336 (VQKQGVQQQQEVQHQGISQVQ). Over residues 337–361 (NTEAKSVGRKSTMSKRMTLRDTPNA) the composition is skewed to polar residues. A compositionally biased stretch (basic residues) spans 380-390 (TKRKSIFKSKK). 2 stretches are compositionally biased toward polar residues: residues 506–517 (QFSQENSGNQPP) and 524–544 (QYSQ…NFDT). A compositionally biased stretch (low complexity) spans 545 to 569 (NASGHNINHNNNNHNNNNNTSSSSS). Residues 612–621 (SSPSIDNTPR) show a composition bias toward polar residues. Positions 640 to 652 (RLFKSNKTHINTK) are enriched in basic residues.

It localises to the cell membrane. May be involved in the control of meiotic sister-chromatid recombination. In Kluyveromyces lactis (strain ATCC 8585 / CBS 2359 / DSM 70799 / NBRC 1267 / NRRL Y-1140 / WM37) (Yeast), this protein is Meiotic sister-chromatid recombination protein 3 (MSC3).